Consider the following 173-residue polypeptide: Protein GrpE (173 aa).

Basic and acidic residues predominate over residues 1-28 (MTEEEKTKSEAEEIEQNNKEEEQEKSVE). Positions 1–30 (MTEEEKTKSEAEEIEQNNKEEEQEKSVEEL) are disordered.

Belongs to the GrpE family. Homodimer.

It localises to the cytoplasm. Its function is as follows. Participates actively in the response to hyperosmotic and heat shock by preventing the aggregation of stress-denatured proteins, in association with DnaK and GrpE. It is the nucleotide exchange factor for DnaK and may function as a thermosensor. Unfolded proteins bind initially to DnaJ; upon interaction with the DnaJ-bound protein, DnaK hydrolyzes its bound ATP, resulting in the formation of a stable complex. GrpE releases ADP from DnaK; ATP binding to DnaK triggers the release of the substrate protein, thus completing the reaction cycle. Several rounds of ATP-dependent interactions between DnaJ, DnaK and GrpE are required for fully efficient folding. The protein is Protein GrpE of Methanosphaera stadtmanae (strain ATCC 43021 / DSM 3091 / JCM 11832 / MCB-3).